Consider the following 149-residue polypeptide: Transcriptional repressor NrdR (149 aa).

The segment at 3-34 is a zinc-finger region; that stretch reads CPFCSAVDTKVIDSRLVGEGSQVRRRRQCLVC. An ATP-cone domain is found at 49–139; it reads PRVIKSNEVR…VYRSFEDIRE (91 aa).

This sequence belongs to the NrdR family. Requires Zn(2+) as cofactor.

Functionally, negatively regulates transcription of bacterial ribonucleotide reductase nrd genes and operons by binding to NrdR-boxes. The polypeptide is Transcriptional repressor NrdR (Pectobacterium carotovorum subsp. carotovorum (strain PC1)).